We begin with the raw amino-acid sequence, 224 residues long: Ribonuclease HII (224 aa).

The region spanning 33-224 is the RNase H type-2 domain; it reads FHVAGVDEVG…LKERYRNDVS (192 aa). Asp39, Glu40, and Asp131 together coordinate a divalent metal cation.

The protein belongs to the RNase HII family. It depends on Mn(2+) as a cofactor. Mg(2+) is required as a cofactor.

It is found in the cytoplasm. The catalysed reaction is Endonucleolytic cleavage to 5'-phosphomonoester.. In terms of biological role, endonuclease that specifically degrades the RNA of RNA-DNA hybrids. The sequence is that of Ribonuclease HII from Bartonella tribocorum (strain CIP 105476 / IBS 506).